The chain runs to 129 residues: Small ribosomal subunit protein uS8 (129 aa).

This sequence belongs to the universal ribosomal protein uS8 family. In terms of assembly, part of the 30S ribosomal subunit.

In terms of biological role, one of the primary rRNA binding proteins, it binds directly to 16S rRNA central domain where it helps coordinate assembly of the platform of the 30S subunit. In Nanoarchaeum equitans (strain Kin4-M), this protein is Small ribosomal subunit protein uS8.